Here is a 400-residue protein sequence, read N- to C-terminus: Acetate kinase (400 aa).

Asparagine 10 contacts Mg(2+). Lysine 17 provides a ligand contact to ATP. Arginine 91 lines the substrate pocket. Aspartate 150 functions as the Proton donor/acceptor in the catalytic mechanism. Residues 210–214 (HLGNG), 285–287 (DCR), and 333–337 (GIGEN) each bind ATP. Residue glutamate 387 participates in Mg(2+) binding.

The protein belongs to the acetokinase family. Homodimer. Mg(2+) serves as cofactor. The cofactor is Mn(2+).

Its subcellular location is the cytoplasm. The enzyme catalyses acetate + ATP = acetyl phosphate + ADP. Its pathway is metabolic intermediate biosynthesis; acetyl-CoA biosynthesis; acetyl-CoA from acetate: step 1/2. Its function is as follows. Catalyzes the formation of acetyl phosphate from acetate and ATP. Can also catalyze the reverse reaction. This Salmonella typhi protein is Acetate kinase.